The primary structure comprises 175 residues: Putative FAS1 domain-containing protein 081L (175 aa).

An FAS1 domain is found at 28–172; it reads GPIVPSVWTI…GLVHIVDQFP (145 aa).

This Invertebrate iridescent virus 3 (IIV-3) protein is Putative FAS1 domain-containing protein 081L.